Consider the following 193-residue polypeptide: Ribonuclease HII (193 aa).

The RNase H type-2 domain maps to 15-193 (YIVAGVDEAG…SYHRKSFKFC (179 aa)). Residues aspartate 21, glutamate 22, and aspartate 112 each contribute to the a divalent metal cation site.

It belongs to the RNase HII family. Mn(2+) serves as cofactor. Mg(2+) is required as a cofactor.

The protein resides in the cytoplasm. It catalyses the reaction Endonucleolytic cleavage to 5'-phosphomonoester.. Endonuclease that specifically degrades the RNA of RNA-DNA hybrids. This chain is Ribonuclease HII, found in Rickettsia typhi (strain ATCC VR-144 / Wilmington).